The chain runs to 756 residues: 1-phosphatidylinositol 4,5-bisphosphate phosphodiesterase delta-1 (756 aa).

The 110-residue stretch at 21-130 (ALLKGSQLLK…WVLGLHKIIH (110 aa)) folds into the PH domain. A substrate binding region spans residues 30 to 57 (KVKSSSWRRERFYKLQEDCKTIWQESRK). 2 EF-hand domains span residues 140 to 175 (KLQH…LNIQ) and 176 to 211 (VDDS…LTQR). Ca(2+) is bound by residues Asp-153, Asn-155, Asp-157, Lys-159, Glu-164, Asp-189, Ser-191, Thr-193, Ser-195, and Glu-200. O-linked (GlcNAc) serine glycosylation occurs at Ser-191. Thr-193 carries an O-linked (GlcNAc) threonine glycan. Residues 296–440 (QDMGQPLSHY…LKGKILLKGK (145 aa)) enclose the PI-PLC X-box domain. Residue His-311 is part of the active site. The Ca(2+) site is built by Asn-312, Glu-341, and Asp-343. The active site involves His-356. Residue Glu-390 participates in Ca(2+) binding. Substrate is bound by residues Lys-438 and Lys-440. Thr-457 carries the phosphothreonine modification. Ser-460 is subject to Phosphoserine. The PI-PLC Y-box domain maps to 492 to 609 (LSDMVIYCKS…GYVLKPAFLR (118 aa)). Substrate contacts are provided by Ser-522 and Arg-549. The region spanning 611 to 737 (PNGTFNPRAL…QGYRHVHLMS (127 aa)) is the C2 domain. 6 residues coordinate Ca(2+): Ile-651, Asp-653, Asn-677, Asp-706, Tyr-707, and Asp-708.

As to quaternary structure, interacts with TGM2. Ca(2+) is required as a cofactor. As to expression, strongly expressed in lung, liver and heart. Also expressed at least in pancreas, kidney, skeletal muscle, placenta and brain.

It catalyses the reaction a 1,2-diacyl-sn-glycero-3-phospho-(1D-myo-inositol-4,5-bisphosphate) + H2O = 1D-myo-inositol 1,4,5-trisphosphate + a 1,2-diacyl-sn-glycerol + H(+). It carries out the reaction a 1,2-diacyl-sn-glycero-3-phospho-(1D-myo-inositol) + H2O = 1D-myo-inositol 1-phosphate + a 1,2-diacyl-sn-glycerol + H(+). In terms of biological role, the production of the second messenger molecules diacylglycerol (DAG) and inositol 1,4,5-trisphosphate (IP3) is mediated by activated phosphatidylinositol-specific phospholipase C enzymes. Essential for trophoblast and placental development. Binds phosphatidylinositol 4,5-bisphosphate. The protein is 1-phosphatidylinositol 4,5-bisphosphate phosphodiesterase delta-1 of Homo sapiens (Human).